We begin with the raw amino-acid sequence, 473 residues long: Protein AUXIN RESPONSE 4 (473 aa).

Residues 1–10 (MAIITEEEED) are compositionally biased toward acidic residues. Positions 1–38 (MAIITEEEEDPKTLNPPKNKPKDSDFTKSESTMKNPKP) are disordered. The span at 29-38 (SESTMKNPKP) shows a compositional bias: polar residues. The helical transmembrane segment at 44–64 (FPFWFYFTVVVSLATIIFISL) threads the bilayer. The AB hydrolase-1 domain maps to 119-283 (TVVIVHGLGL…DSSISPALPL (165 aa)).

Most abundant in root tissue, lesser amounts in rosette leaves, stems and flowers and very little in mature siliques.

Its subcellular location is the endoplasmic reticulum membrane. Required for the auxin influx facilitator AUX1 polar trafficking and its asymmetric localization within the plasma membrane. Not involved in the PIN proteins localization. In Arabidopsis thaliana (Mouse-ear cress), this protein is Protein AUXIN RESPONSE 4 (AXR4).